The primary structure comprises 124 residues: Large ribosomal subunit protein bL12 (124 aa).

This sequence belongs to the bacterial ribosomal protein bL12 family. As to quaternary structure, homodimer. Part of the ribosomal stalk of the 50S ribosomal subunit. Forms a multimeric L10(L12)X complex, where L10 forms an elongated spine to which 2 to 4 L12 dimers bind in a sequential fashion. Binds GTP-bound translation factors.

In terms of biological role, forms part of the ribosomal stalk which helps the ribosome interact with GTP-bound translation factors. Is thus essential for accurate translation. This Dehalococcoides mccartyi (strain ATCC BAA-2266 / KCTC 15142 / 195) (Dehalococcoides ethenogenes (strain 195)) protein is Large ribosomal subunit protein bL12.